Reading from the N-terminus, the 613-residue chain is MKKAKLIFKDNTPFSLDFDDFYFNFKDGLNESKFVYTHSFEWKNQENFIIAESGFGIGLNFFLTLKRFLETTPSKRPKKLFYISVEAFYIEKEQLREIYQKLEFYEEFKELLEQFLKFYPKAKEGIYRFYFEDCFLDLVFEDIAVLKELDFKADVWYLDGFSPNKNSQMFDENLIFEVARLSKKNTQICTFSSASFLQKNLKKYGFRVEKTKGFRKREMIKAYLENELEFKDKEAYFSRTFSSLKNKKVAIIGAGISSAVLAYELSLRGFEIDIFEKHLELGKGASGNESGILSSLILKPKVNLGEFSELSFIEASRFYRQILDLEFKGVVEFAHNDLMQERFDTQRENVLFKISKNQAFLEEGGVIFPKKLVKNLFEKSKACIYFNHEFQAYKFENGCFSLKFKNDVVKSDYAVLIYAMGADAKDFVFYDEMKLSKVRGQVTHLKPFLDTPFPLSSKAYICPVKDDLQVIGASYDRLNASLESKEEDDKQNIENIADFMDKNTKLEIIGSKVGFRSYSSDRFMIVGNAYDEAFYKEEYKALLWTKNKEQKPAKMSCNLYFNFAHGSRGFSTSVLAARYLCALINNEPLCLEKKYIHAIHPARFLIRKLKKGL.

The segment at 1 to 225 (MKKAKLIFKD…KREMIKAYLE (225 aa)) is tRNA (mnm(5)s(2)U34)-methyltransferase. The interval 252–613 (IGAGISSAVL…FLIRKLKKGL (362 aa)) is FAD-dependent cmnm(5)s(2)U34 oxidoreductase.

The protein in the N-terminal section; belongs to the methyltransferase superfamily. tRNA (mnm(5)s(2)U34)-methyltransferase family. This sequence in the C-terminal section; belongs to the DAO family. FAD serves as cofactor.

It is found in the cytoplasm. The catalysed reaction is 5-aminomethyl-2-thiouridine(34) in tRNA + S-adenosyl-L-methionine = 5-methylaminomethyl-2-thiouridine(34) in tRNA + S-adenosyl-L-homocysteine + H(+). In terms of biological role, catalyzes the last two steps in the biosynthesis of 5-methylaminomethyl-2-thiouridine (mnm(5)s(2)U) at the wobble position (U34) in tRNA. Catalyzes the FAD-dependent demodification of cmnm(5)s(2)U34 to nm(5)s(2)U34, followed by the transfer of a methyl group from S-adenosyl-L-methionine to nm(5)s(2)U34, to form mnm(5)s(2)U34. This chain is tRNA 5-methylaminomethyl-2-thiouridine biosynthesis bifunctional protein MnmC, found in Campylobacter jejuni subsp. jejuni serotype O:2 (strain ATCC 700819 / NCTC 11168).